The chain runs to 79 residues: Major outer membrane lipoprotein Lpp 3 (79 aa).

Positions 1–21 are cleaved as a signal peptide; sequence MNRTNKLILGAVVLGSALLAG. The N-palmitoyl cysteine moiety is linked to residue Cys22. Cys22 carries the S-diacylglycerol cysteine lipid modification. 2 repeats span residues 25-35 and 39-49; these read NAKIDQLSSDV and SAKVDQLSNDV. A coiled-coil region spans residues 28 to 76; the sequence is IDQLSSDVQTLSAKVDQLSNDVNAMRSDVQAAKDDAARANQRLDNKVLR. The residue at position 79 (Lys79) is an N6-murein peptidoglycan lysine.

It belongs to the Lpp family. As to quaternary structure, homotrimer.

It localises to the cell outer membrane. The protein resides in the secreted. The protein localises to the cell wall. Functionally, a highly abundant outer membrane lipoprotein that controls the distance between the inner and outer membranes. The only protein known to be covalently linked to the peptidoglycan network (PGN). Also non-covalently binds the PGN. The link between the cell outer membrane and PGN contributes to maintenance of the structural and functional integrity of the cell envelope, and maintains the correct distance between the PGN and the outer membrane. In Salmonella paratyphi A (strain ATCC 9150 / SARB42), this protein is Major outer membrane lipoprotein Lpp 3.